Consider the following 475-residue polypeptide: ATP synthase subunit beta, chloroplastic (475 aa).

Position 156 to 163 (156 to 163) interacts with ATP; the sequence is GGAGVGKT.

This sequence belongs to the ATPase alpha/beta chains family. As to quaternary structure, F-type ATPases have 2 components, CF(1) - the catalytic core - and CF(0) - the membrane proton channel. CF(1) has five subunits: alpha(3), beta(3), gamma(1), delta(1), epsilon(1). CF(0) has four main subunits: a(1), b(1), b'(1) and c(9-12).

It is found in the plastid. It localises to the chloroplast thylakoid membrane. The enzyme catalyses ATP + H2O + 4 H(+)(in) = ADP + phosphate + 5 H(+)(out). Its function is as follows. Produces ATP from ADP in the presence of a proton gradient across the membrane. The catalytic sites are hosted primarily by the beta subunits. This chain is ATP synthase subunit beta, chloroplastic, found in Phaeodactylum tricornutum (strain CCAP 1055/1).